The primary structure comprises 450 residues: Tol-Pal system protein TolB (450 aa).

An N-terminal signal peptide occupies residues 1–37 (MIERNGLQRMPFRLNRRHMISGMASAAVLLGSRQALG).

It belongs to the TolB family. As to quaternary structure, the Tol-Pal system is composed of five core proteins: the inner membrane proteins TolA, TolQ and TolR, the periplasmic protein TolB and the outer membrane protein Pal. They form a network linking the inner and outer membranes and the peptidoglycan layer.

The protein localises to the periplasm. Its function is as follows. Part of the Tol-Pal system, which plays a role in outer membrane invagination during cell division and is important for maintaining outer membrane integrity. The chain is Tol-Pal system protein TolB from Nitrobacter winogradskyi (strain ATCC 25391 / DSM 10237 / CIP 104748 / NCIMB 11846 / Nb-255).